The primary structure comprises 347 residues: GMP reductase (347 aa).

An NADP(+)-binding site is contributed by 108–131 (ADFIKLSEILAMSEELNFICIDIA). K(+)-binding residues include Gly181 and Gly183. Cys186 serves as the catalytic Thioimidate intermediate. NADP(+) is bound at residue 216-239 (IIGDGGCSCAGDVAKAFGGGADFV).

It belongs to the IMPDH/GMPR family. GuaC type 1 subfamily. As to quaternary structure, homotetramer.

It catalyses the reaction IMP + NH4(+) + NADP(+) = GMP + NADPH + 2 H(+). Functionally, catalyzes the irreversible NADPH-dependent deamination of GMP to IMP. It functions in the conversion of nucleobase, nucleoside and nucleotide derivatives of G to A nucleotides, and in maintaining the intracellular balance of A and G nucleotides. In Shewanella halifaxensis (strain HAW-EB4), this protein is GMP reductase.